A 134-amino-acid chain; its full sequence is Small ribosomal subunit protein uS9 (134 aa).

The protein belongs to the universal ribosomal protein uS9 family.

The polypeptide is Small ribosomal subunit protein uS9 (Pseudothermotoga lettingae (strain ATCC BAA-301 / DSM 14385 / NBRC 107922 / TMO) (Thermotoga lettingae)).